We begin with the raw amino-acid sequence, 101 residues long: Putative septation protein SpoVG (101 aa).

It belongs to the SpoVG family.

Its function is as follows. Could be involved in septation. In Anaeromyxobacter dehalogenans (strain 2CP-C), this protein is Putative septation protein SpoVG.